The following is a 40-amino-acid chain: Large ribosomal subunit protein bL36B (40 aa).

The protein belongs to the bacterial ribosomal protein bL36 family.

This chain is Large ribosomal subunit protein bL36B, found in Arthrobacter sp. (strain FB24).